The sequence spans 189 residues: Elongation factor P (189 aa).

This sequence belongs to the elongation factor P family.

It is found in the cytoplasm. Its pathway is protein biosynthesis; polypeptide chain elongation. Involved in peptide bond synthesis. Stimulates efficient translation and peptide-bond synthesis on native or reconstituted 70S ribosomes in vitro. Probably functions indirectly by altering the affinity of the ribosome for aminoacyl-tRNA, thus increasing their reactivity as acceptors for peptidyl transferase. The chain is Elongation factor P from Chloroflexus aggregans (strain MD-66 / DSM 9485).